Reading from the N-terminus, the 23-residue chain is Maculatin-1.2 (23 aa).

Alanine amide is present on Ala-23.

As to expression, expressed by the skin dorsal glands.

The protein localises to the secreted. Shows antibacterial activity against S.aureus and S.uberis. The polypeptide is Maculatin-1.2 (Ranoidea genimaculata (Brown-spotted tree frog)).